A 455-amino-acid polypeptide reads, in one-letter code: Probable glycine dehydrogenase (decarboxylating) subunit 1 (455 aa).

This sequence belongs to the GcvP family. N-terminal subunit subfamily. The glycine cleavage system is composed of four proteins: P, T, L and H. In this organism, the P 'protein' is a heterodimer of two subunits.

The catalysed reaction is N(6)-[(R)-lipoyl]-L-lysyl-[glycine-cleavage complex H protein] + glycine + H(+) = N(6)-[(R)-S(8)-aminomethyldihydrolipoyl]-L-lysyl-[glycine-cleavage complex H protein] + CO2. In terms of biological role, the glycine cleavage system catalyzes the degradation of glycine. The P protein binds the alpha-amino group of glycine through its pyridoxal phosphate cofactor; CO(2) is released and the remaining methylamine moiety is then transferred to the lipoamide cofactor of the H protein. The polypeptide is Probable glycine dehydrogenase (decarboxylating) subunit 1 (Francisella tularensis subsp. mediasiatica (strain FSC147)).